Reading from the N-terminus, the 450-residue chain is Glutamyl-tRNA reductase (450 aa).

Substrate is bound by residues 50 to 53 (TCNR), S109, 114 to 116 (EPQ), and Q120. C51 serves as the catalytic Nucleophile. An NADP(+)-binding site is contributed by 189 to 194 (GAGEMA). Positions 422–450 (NEPEQPEAHKNRKRPQPDLPAGCPGKTIL) are disordered.

Belongs to the glutamyl-tRNA reductase family. Homodimer.

The catalysed reaction is (S)-4-amino-5-oxopentanoate + tRNA(Glu) + NADP(+) = L-glutamyl-tRNA(Glu) + NADPH + H(+). It participates in porphyrin-containing compound metabolism; protoporphyrin-IX biosynthesis; 5-aminolevulinate from L-glutamyl-tRNA(Glu): step 1/2. Its function is as follows. Catalyzes the NADPH-dependent reduction of glutamyl-tRNA(Glu) to glutamate 1-semialdehyde (GSA). In Oleidesulfovibrio alaskensis (strain ATCC BAA-1058 / DSM 17464 / G20) (Desulfovibrio alaskensis), this protein is Glutamyl-tRNA reductase.